The following is a 66-amino-acid chain: UPF0434 protein Jann_0424 (66 aa).

The protein belongs to the UPF0434 family.

This is UPF0434 protein Jann_0424 from Jannaschia sp. (strain CCS1).